Reading from the N-terminus, the 689-residue chain is Glycine--tRNA ligase beta subunit (689 aa).

This sequence belongs to the class-II aminoacyl-tRNA synthetase family. Tetramer of two alpha and two beta subunits.

The protein localises to the cytoplasm. The enzyme catalyses tRNA(Gly) + glycine + ATP = glycyl-tRNA(Gly) + AMP + diphosphate. This is Glycine--tRNA ligase beta subunit from Shewanella baltica (strain OS155 / ATCC BAA-1091).